The chain runs to 390 residues: MSWWWAGAIGAARKKFEEDDAPRDCQSVALIIGVTGIVGNSLAEILPISDTPGGPWKVYGVARRPRPAWNADHPVEYIQCDISDASDTHTKLSPLTDVTHIFWVTWANRPTESECCELNGTMLRNVLNALIPKAANLHHICLQTGHKHYIGPFEAFGKIKPHEPPFTEDMPRLNAPNFYYTLEDMLVEASEKKAGLNWSVHRPAVIFGFSPFSMMNIIGTLCVYAAICKHENTPLKFPGTKAAWNCYSVASDADLIAEHQIWAAVDPYAKNEAFNCSNGDLFKWKHLWKVLAEQFGVEYAEFDESEKPTSLVERMKDKGPVWEEIVRENGLHTTKLEGVATWWFADVILGGECLLDSMNKSKEHGYLGFRNTKNSLISVIDKMKAHKIVP.

NADP(+)-binding positions include 35–37 (TGI), 63–64 (RR), 81–82 (DI), 105–106 (TW), and Q143. Active-site residues include K147 and Y179. K147 and Y179 together coordinate substrate. Residues Y179 and 213–215 (SMM) contribute to the NADP(+) site.

This sequence belongs to the short-chain dehydrogenases/reductases (SDR) family. Highly divergent.

It carries out the reaction (S)-8-oxocitronellyl enol + NADP(+) = (6E)-8-oxogeranial + NADPH + H(+). The enzyme catalyses (S)-8-oxocitronellyl enol + NAD(+) = (6E)-8-oxogeranial + NADH + H(+). Functionally, iridoid synthase that catalyzes the first step in generation of the iridoid ring scaffold using the linear monoterpene (6E)-8-oxogeranial as substrate. Iridoids comprise a large family of distinctive bicyclic monoterpenes that possess a wide range of pharmacological activities, including anticancer, anti-inflammatory, antifungal and antibacterial activities. The sequence is that of (S)-8-oxocitronellyl enol synthase CYC2 from Camptotheca acuminata (Happy tree).